Consider the following 513-residue polypeptide: Putative thymidine phosphorylase (513 aa).

This sequence belongs to the thymidine/pyrimidine-nucleoside phosphorylase family. Type 2 subfamily.

It carries out the reaction thymidine + phosphate = 2-deoxy-alpha-D-ribose 1-phosphate + thymine. This is Putative thymidine phosphorylase from Rhodopseudomonas palustris (strain BisB18).